Reading from the N-terminus, the 793-residue chain is Xaa-Pro dipeptidyl-peptidase (793 aa).

Catalysis depends on charge relay system residues serine 363, aspartate 483, and histidine 514.

It belongs to the peptidase S15 family. In terms of assembly, homodimer.

It localises to the cytoplasm. It carries out the reaction Hydrolyzes Xaa-Pro-|- bonds to release unblocked, N-terminal dipeptides from substrates including Ala-Pro-|-p-nitroanilide and (sequentially) Tyr-Pro-|-Phe-Pro-|-Gly-Pro-|-Ile.. In terms of biological role, removes N-terminal dipeptides sequentially from polypeptides having unsubstituted N-termini provided that the penultimate residue is proline. In Lactobacillus helveticus (strain DPC 4571), this protein is Xaa-Pro dipeptidyl-peptidase.